The chain runs to 69 residues: DNA-directed RNA polymerase subunit epsilon (69 aa).

It belongs to the RNA polymerase subunit epsilon family. RNAP is composed of a core of 2 alpha, a beta and a beta' subunit. The core is associated with a delta subunit, and at least one of epsilon or omega. When a sigma factor is associated with the core the holoenzyme is formed, which can initiate transcription.

It carries out the reaction RNA(n) + a ribonucleoside 5'-triphosphate = RNA(n+1) + diphosphate. Its function is as follows. A non-essential component of RNA polymerase (RNAP). The protein is DNA-directed RNA polymerase subunit epsilon of Geobacillus sp. (strain WCH70).